The chain runs to 244 residues: 5-oxoprolinase subunit A (244 aa).

Belongs to the LamB/PxpA family. As to quaternary structure, forms a complex composed of PxpA, PxpB and PxpC.

It carries out the reaction 5-oxo-L-proline + ATP + 2 H2O = L-glutamate + ADP + phosphate + H(+). Catalyzes the cleavage of 5-oxoproline to form L-glutamate coupled to the hydrolysis of ATP to ADP and inorganic phosphate. This Salmonella typhimurium (strain LT2 / SGSC1412 / ATCC 700720) protein is 5-oxoprolinase subunit A.